The sequence spans 159 residues: Cyclic pyranopterin monophosphate synthase (159 aa).

Substrate contacts are provided by residues 75–77 (MCH) and 113–114 (ME). Residue D128 is part of the active site.

It belongs to the MoaC family. In terms of assembly, homohexamer; trimer of dimers.

It catalyses the reaction (8S)-3',8-cyclo-7,8-dihydroguanosine 5'-triphosphate = cyclic pyranopterin phosphate + diphosphate. It functions in the pathway cofactor biosynthesis; molybdopterin biosynthesis. Catalyzes the conversion of (8S)-3',8-cyclo-7,8-dihydroguanosine 5'-triphosphate to cyclic pyranopterin monophosphate (cPMP). This chain is Cyclic pyranopterin monophosphate synthase, found in Desulfatibacillum aliphaticivorans.